The sequence spans 171 residues: uncharacterized protein (171 aa).

2 disordered regions span residues 1–50 (MSHR…THLS) and 71–91 (RIDK…PMMK).

This is an uncharacterized protein from Caenorhabditis elegans.